The primary structure comprises 283 residues: Putative ABC transporter ATP-binding protein MA_4342 (283 aa).

Residues 3–238 (IILENVSFFY…KNVPLPPVTS (236 aa)) form the ABC transporter domain. An ATP-binding site is contributed by 40-47 (GEKGAGKS).

The protein belongs to the ABC transporter superfamily.

The protein localises to the cell membrane. Probably part of an ABC transporter complex. Responsible for energy coupling to the transport system. The protein is Putative ABC transporter ATP-binding protein MA_4342 of Methanosarcina acetivorans (strain ATCC 35395 / DSM 2834 / JCM 12185 / C2A).